Consider the following 199-residue polypeptide: NAD(P)H-quinone oxidoreductase chain 6 (199 aa).

The next 5 membrane-spanning stretches (helical) occupy residues Ile9 to Leu29, Val32 to Leu52, Ala61 to Val81, Leu102 to Ile122, and Phe143 to Val163.

Belongs to the complex I subunit 6 family.

The protein resides in the membrane. It carries out the reaction a plastoquinone + NADH + (n+1) H(+)(in) = a plastoquinol + NAD(+) + n H(+)(out). The catalysed reaction is a plastoquinone + NADPH + (n+1) H(+)(in) = a plastoquinol + NADP(+) + n H(+)(out). Its function is as follows. NDH-1 shuttles electrons from NAD(P)H, via FMN and iron-sulfur (Fe-S) centers, to quinones in the respiratory chain. The immediate electron acceptor for the enzyme in this species is believed to be plastoquinone. Couples the redox reaction to proton translocation (for every two electrons transferred, four hydrogen ions are translocated across the cytoplasmic membrane), and thus conserves the redox energy in a proton gradient. This chain is NAD(P)H-quinone oxidoreductase chain 6 (ndhG), found in Leptolyngbya boryana (Plectonema boryanum).